Reading from the N-terminus, the 242-residue chain is Probable transcriptional regulatory protein Cthe_2075 (242 aa).

It belongs to the TACO1 family.

The protein localises to the cytoplasm. The sequence is that of Probable transcriptional regulatory protein Cthe_2075 from Acetivibrio thermocellus (strain ATCC 27405 / DSM 1237 / JCM 9322 / NBRC 103400 / NCIMB 10682 / NRRL B-4536 / VPI 7372) (Clostridium thermocellum).